We begin with the raw amino-acid sequence, 64 residues long: Large ribosomal subunit protein uL29 (64 aa).

The protein belongs to the universal ribosomal protein uL29 family.

In Levilactobacillus brevis (strain ATCC 367 / BCRC 12310 / CIP 105137 / JCM 1170 / LMG 11437 / NCIMB 947 / NCTC 947) (Lactobacillus brevis), this protein is Large ribosomal subunit protein uL29.